Here is a 742-residue protein sequence, read N- to C-terminus: MQISLQIHLSSFTFLLLIFLLPVLSESQVASSESQTLLEIQKQLQYPQVLQSWTDTTNFCHIRPSPSLRIICLHGHVTELTVTGNRTSKLSGSFHKLFTLLTQLSSLKTLSLTSLGISGSLSPKIITKLSPSLESLNLSSNFISGKIPEEIVSLKNLKSLVLRDNMFWGFVSDDLRGLSNLQELDLGGNKLGPEVPSLPSKLTTVSLKNNSFRSKIPEQIKKLNNLQSLDLSSNEFTGSIPEFLFSIPSLQILSLDQNLLSGSLPNSSCTSSKIITLDVSHNLLTGKLPSCYSSKSFSNQTVLFSFNCLSLIGTPNAKYQRPLSFCQNQASKAIAVEPIPKAKDKDSARIKLGLVILIIIGVIILAAILVLLVLIALKRRRSRSEDDPFEVNNSNNERHASDKVSVCSTTTASSKSLPDSRRVPQTMRSAVIGLPPYRVFSLEELEEATNDFDAASLFCEQLYRGCLREGIPVTVRVIKLKQKSLPQSLAQQMEVLSKLRHMHLVSVLGHSIASNQDHNQHAGHTIFIVQEYISSGSLRDFLTNCRKKEVLKWPQRMAIAIGVARGIQFLHMGVAPGIFGNNLKIENIMLDETLTVKISGYTIPLPSKVGEERPQAKKPRSNEDREKEDVYQFGVILLQIITGKVVAAGSSEMGSLKLQLENGLRDEPSVLSSLADPSVKGSYAYESLRTTVEFAINCLCEDQSKRPSIEDVVWNLQYTIQVQQGWRPSSGNHESSMKAIYE.

The N-terminal stretch at 1 to 25 is a signal peptide; the sequence is MQISLQIHLSSFTFLLLIFLLPVLS. Topologically, residues 26–354 are extracellular; it reads ESQVASSESQ…KDSARIKLGL (329 aa). 9 LRR repeats span residues 74 to 96, 104 to 128, 130 to 154, 156 to 177, 178 to 204, 206 to 223, 224 to 247, 249 to 271, and 273 to 294; these read HGHVTELTVTGNRTSKLSGSFHK, LSSLKTLSLTSLGISGSLSPKIITK, SPSLESLNLSSNFISGKIPEEIVSL, NLKSLVLRDNMFWGFVSDDLRG, LSNLQELDLGGNKLGPEVPSLPSKLTT, SLKNNSFRSKIPEQIKKL, NNLQSLDLSSNEFTGSIPEFLFSI, SLQILSLDQNLLSGSLPNSSCTS, and KIITLDVSHNLLTGKLPSCYSS. An N-linked (GlcNAc...) asparagine glycan is attached at Asn-85. Residue Asn-137 is glycosylated (N-linked (GlcNAc...) asparagine). Asn-209 is a glycosylation site (N-linked (GlcNAc...) asparagine). A glycan (N-linked (GlcNAc...) asparagine) is linked at Asn-266. Residue Asn-299 is glycosylated (N-linked (GlcNAc...) asparagine). The chain crosses the membrane as a helical span at residues 355–375; sequence VILIIIGVIILAAILVLLVLI. Over 376-742 the chain is Cytoplasmic; it reads ALKRRRSRSE…HESSMKAIYE (367 aa). Residues 386–424 form a disordered region; it reads DDPFEVNNSNNERHASDKVSVCSTTTASSKSLPDSRRVP. The span at 406–417 shows a compositional bias: polar residues; it reads VCSTTTASSKSL. The 295-residue stretch at 426-720 folds into the Protein kinase domain; that stretch reads TMRSAVIGLP…DVVWNLQYTI (295 aa).

The protein belongs to the protein kinase superfamily. Ser/Thr protein kinase family.

The protein localises to the membrane. The catalysed reaction is L-seryl-[protein] + ATP = O-phospho-L-seryl-[protein] + ADP + H(+). It carries out the reaction L-threonyl-[protein] + ATP = O-phospho-L-threonyl-[protein] + ADP + H(+). This is Probable LRR receptor-like serine/threonine-protein kinase At2g02780 from Arabidopsis thaliana (Mouse-ear cress).